The following is a 241-amino-acid chain: 1-(5-phosphoribosyl)-5-[(5-phosphoribosylamino)methylideneamino] imidazole-4-carboxamide isomerase (241 aa).

Asp7 acts as the Proton acceptor in catalysis. Catalysis depends on Asp129, which acts as the Proton donor.

It belongs to the HisA/HisF family.

It is found in the cytoplasm. It catalyses the reaction 1-(5-phospho-beta-D-ribosyl)-5-[(5-phospho-beta-D-ribosylamino)methylideneamino]imidazole-4-carboxamide = 5-[(5-phospho-1-deoxy-D-ribulos-1-ylimino)methylamino]-1-(5-phospho-beta-D-ribosyl)imidazole-4-carboxamide. It participates in amino-acid biosynthesis; L-histidine biosynthesis; L-histidine from 5-phospho-alpha-D-ribose 1-diphosphate: step 4/9. In Buchnera aphidicola subsp. Baizongia pistaciae (strain Bp), this protein is 1-(5-phosphoribosyl)-5-[(5-phosphoribosylamino)methylideneamino] imidazole-4-carboxamide isomerase.